Reading from the N-terminus, the 144-residue chain is UPF0102 protein BURPS1106A_3900 (144 aa).

The disordered stretch occupies residues 1–28; that stretch reads MCHAREASPGTGEPEAAPRDNFPRAAGS.

The protein belongs to the UPF0102 family.

The chain is UPF0102 protein BURPS1106A_3900 from Burkholderia pseudomallei (strain 1106a).